We begin with the raw amino-acid sequence, 613 residues long: GPI mannosyltransferase 3 (613 aa).

The N-linked (GlcNAc...) asparagine glycan is linked to Asn19. Transmembrane regions (helical) follow at residues 22–42, 83–103, 106–126, 132–152, 168–188, 216–236, 252–272, 280–300, 309–329, 342–362, 369–389, and 411–431; these read FFLR…ATFF, LFAG…PVGI, ATIL…LGDW, AVSI…LQIF, LEMT…LGVA, LAVV…LFTI, VVTL…ISAA, FWTF…LAVF, YFLQ…VASL, FNVL…LSLI, FIYP…ASFF, and YLFV…FFHQ.

Belongs to the glycosyltransferase 22 family. PIGB subfamily.

The protein resides in the endoplasmic reticulum membrane. It participates in glycolipid biosynthesis; glycosylphosphatidylinositol-anchor biosynthesis. In terms of biological role, mannosyltransferase involved in glycosylphosphatidylinositol-anchor biosynthesis. Transfers the third mannose to Man2-GlcN-acyl-PI during GPI precursor assembly. This Gibberella zeae (strain ATCC MYA-4620 / CBS 123657 / FGSC 9075 / NRRL 31084 / PH-1) (Wheat head blight fungus) protein is GPI mannosyltransferase 3 (GPI10).